The sequence spans 381 residues: Lipopolysaccharide 1,2-N-acetylglucosaminetransferase (381 aa).

It belongs to the glycosyltransferase group 1 family. Glycosyltransferase 4 subfamily.

It is found in the cell inner membrane. It carries out the reaction UDP-N-acetyl-alpha-D-glucosamine + [lipopolysaccharide] = UDP + N-acetyl-alpha-D-glucosaminyl-[lipopolysaccharide].. The protein operates within bacterial outer membrane biogenesis; LPS core biosynthesis. Functionally, transferase involved in the biosynthesis of the core oligosaccharide region of lipopolysaccharide (LPS). Catalyzes the addition of the terminal N-acetyl-D-glucosamine (GlcNAc) group to the outer-core glucose II, the last step of the lipid A-core oligosaccharide biosynthesis. This is Lipopolysaccharide 1,2-N-acetylglucosaminetransferase from Salmonella typhimurium (strain LT2 / SGSC1412 / ATCC 700720).